We begin with the raw amino-acid sequence, 345 residues long: Nicotinate-nucleotide--dimethylbenzimidazole phosphoribosyltransferase (345 aa).

The active-site Proton acceptor is E312.

This sequence belongs to the CobT family.

The enzyme catalyses 5,6-dimethylbenzimidazole + nicotinate beta-D-ribonucleotide = alpha-ribazole 5'-phosphate + nicotinate + H(+). Its pathway is nucleoside biosynthesis; alpha-ribazole biosynthesis; alpha-ribazole from 5,6-dimethylbenzimidazole: step 1/2. Catalyzes the synthesis of alpha-ribazole-5'-phosphate from nicotinate mononucleotide (NAMN) and 5,6-dimethylbenzimidazole (DMB). This is Nicotinate-nucleotide--dimethylbenzimidazole phosphoribosyltransferase from Bacteroides fragilis (strain ATCC 25285 / DSM 2151 / CCUG 4856 / JCM 11019 / LMG 10263 / NCTC 9343 / Onslow / VPI 2553 / EN-2).